The following is a 116-amino-acid chain: Ribosome-binding factor A (116 aa).

Belongs to the RbfA family. Monomer. Binds 30S ribosomal subunits, but not 50S ribosomal subunits or 70S ribosomes.

The protein localises to the cytoplasm. One of several proteins that assist in the late maturation steps of the functional core of the 30S ribosomal subunit. Associates with free 30S ribosomal subunits (but not with 30S subunits that are part of 70S ribosomes or polysomes). Required for efficient processing of 16S rRNA. May interact with the 5'-terminal helix region of 16S rRNA. This chain is Ribosome-binding factor A, found in Streptococcus pyogenes serotype M3 (strain SSI-1).